A 360-amino-acid polypeptide reads, in one-letter code: Spermidine/putrescine-binding periplasmic protein 1 (360 aa).

The signal sequence occupies residues 1 to 16 (MKKFAGLITASFVAAT).

It belongs to the bacterial solute-binding protein PotD/PotF family.

The protein resides in the periplasm. Functionally, required for the activity of the bacterial periplasmic transport system of putrescine and spermidine. Polyamine binding protein. In Haemophilus influenzae (strain ATCC 51907 / DSM 11121 / KW20 / Rd), this protein is Spermidine/putrescine-binding periplasmic protein 1 (potD-B).